The following is a 209-amino-acid chain: Na(+)-translocating NADH-quinone reductase subunit D (209 aa).

A run of 5 helical transmembrane segments spans residues 42-62 (LVMTIAVTLVTAFSSFFISLI), 72-92 (IIVQMAIIASLVIVVDQILQA), 103-123 (VFVGLIITNCIVMGRAEAYAM), 131-151 (FMDGIGNGLGYGVILVLVGFL), and 178-198 (NGLFLLAPSAFFIIGMLIWGL).

Belongs to the NqrDE/RnfAE family. In terms of assembly, composed of six subunits; NqrA, NqrB, NqrC, NqrD, NqrE and NqrF.

The protein resides in the cell inner membrane. It catalyses the reaction a ubiquinone + n Na(+)(in) + NADH + H(+) = a ubiquinol + n Na(+)(out) + NAD(+). In terms of biological role, NQR complex catalyzes the reduction of ubiquinone-1 to ubiquinol by two successive reactions, coupled with the transport of Na(+) ions from the cytoplasm to the periplasm. NqrA to NqrE are probably involved in the second step, the conversion of ubisemiquinone to ubiquinol. This Photorhabdus laumondii subsp. laumondii (strain DSM 15139 / CIP 105565 / TT01) (Photorhabdus luminescens subsp. laumondii) protein is Na(+)-translocating NADH-quinone reductase subunit D.